We begin with the raw amino-acid sequence, 394 residues long: GDP-mannose transporter (394 aa).

Residues Met-1–Pro-55 lie on the Cytoplasmic side of the membrane. The chain crosses the membrane as a helical span at residues Ala-56–Val-76. The Lumenal portion of the chain corresponds to Ser-77–Glu-80. The chain crosses the membrane as a helical span at residues Trp-81 to Phe-101. At Cys-102–Lys-121 the chain is on the cytoplasmic side. The helical transmembrane segment at Trp-122 to Ser-144 threads the bilayer. The Lumenal segment spans residues Val-145–Thr-149. The chain crosses the membrane as a helical span at residues Ile-150–Phe-167. At Gly-168–Pro-173 the chain is on the cytoplasmic side. A helical transmembrane segment spans residues Leu-174–Ile-198. Residues His-199 to Thr-213 lie on the Lumenal side of the membrane. The helical transmembrane segment at Leu-214 to Gly-234 threads the bilayer. Topologically, residues Met-235–Asp-246 are cytoplasmic. A helical membrane pass occupies residues Trp-247–Ile-267. Topologically, residues Ala-268 to Ala-287 are lumenal. The chain crosses the membrane as a helical span at residues Leu-288–Trp-308. Residues Cys-309–Thr-316 are Cytoplasmic-facing. The chain crosses the membrane as a helical span at residues Thr-317–Ala-339. Residues Pro-340–Thr-342 lie on the Lumenal side of the membrane. The chain crosses the membrane as a helical span at residues Phe-343 to Ala-362. Residues Lys-363–Ser-394 are Cytoplasmic-facing. The tract at residues Lys-371–Ser-394 is disordered. Polar residues predominate over residues Leu-374–Ser-394.

Belongs to the TPT transporter family. SLC35D subfamily. As to quaternary structure, homooligomer.

The protein localises to the golgi apparatus membrane. It is found in the cytoplasmic vesicle membrane. The protein resides in the endoplasmic reticulum membrane. Functionally, involved in the import of GDP-mannose from the cytoplasm into the Golgi lumen. In Pyricularia oryzae (strain 70-15 / ATCC MYA-4617 / FGSC 8958) (Rice blast fungus), this protein is GDP-mannose transporter (VRG4).